A 154-amino-acid polypeptide reads, in one-letter code: MSVTDVSGLSQLGTKVDTPESPEKAVLEKVPNGNAGTDYVVRFTAPEFTSLCPMTGQPDFAHIVIDYIPGDFLVESKSLKLFLQSFRNHGAFHEDCSVYIAKRLVELLQPKWLRIGAYWYPRGGIPIDVFWQTGAAPEGVWLPDQGVAPYRGRG.

Positions 1–13 (MSVTDVSGLSQLG) are enriched in polar residues. Residues 1–30 (MSVTDVSGLSQLGTKVDTPESPEKAVLEKV) are disordered. The span at 17 to 27 (DTPESPEKAVL) shows a compositional bias: basic and acidic residues. The Thioimide intermediate role is filled by Cys-52. The active-site Proton donor is the Asp-59. Residues 74–76 (VES) and 93–94 (HE) each bind substrate.

This sequence belongs to the GTP cyclohydrolase I family. QueF type 1 subfamily.

Its subcellular location is the cytoplasm. The catalysed reaction is 7-aminomethyl-7-carbaguanine + 2 NADP(+) = 7-cyano-7-deazaguanine + 2 NADPH + 3 H(+). It functions in the pathway tRNA modification; tRNA-queuosine biosynthesis. In terms of biological role, catalyzes the NADPH-dependent reduction of 7-cyano-7-deazaguanine (preQ0) to 7-aminomethyl-7-deazaguanine (preQ1). This chain is NADPH-dependent 7-cyano-7-deazaguanine reductase, found in Agrobacterium fabrum (strain C58 / ATCC 33970) (Agrobacterium tumefaciens (strain C58)).